We begin with the raw amino-acid sequence, 158 residues long: 6,7-dimethyl-8-ribityllumazine synthase (158 aa).

5-amino-6-(D-ribitylamino)uracil-binding positions include Phe24, Ala58–Glu60, and Ala82–Ile84. Position 87-88 (Gly87–Thr88) interacts with (2S)-2-hydroxy-3-oxobutyl phosphate. The active-site Proton donor is the His90. Residue Phe115 coordinates 5-amino-6-(D-ribitylamino)uracil. Arg129 is a (2S)-2-hydroxy-3-oxobutyl phosphate binding site.

The protein belongs to the DMRL synthase family. In terms of assembly, forms an icosahedral capsid composed of 60 subunits, arranged as a dodecamer of pentamers.

The enzyme catalyses (2S)-2-hydroxy-3-oxobutyl phosphate + 5-amino-6-(D-ribitylamino)uracil = 6,7-dimethyl-8-(1-D-ribityl)lumazine + phosphate + 2 H2O + H(+). Its pathway is cofactor biosynthesis; riboflavin biosynthesis; riboflavin from 2-hydroxy-3-oxobutyl phosphate and 5-amino-6-(D-ribitylamino)uracil: step 1/2. Functionally, catalyzes the formation of 6,7-dimethyl-8-ribityllumazine by condensation of 5-amino-6-(D-ribitylamino)uracil with 3,4-dihydroxy-2-butanone 4-phosphate. This is the penultimate step in the biosynthesis of riboflavin. This Azotobacter vinelandii (strain DJ / ATCC BAA-1303) protein is 6,7-dimethyl-8-ribityllumazine synthase.